The following is a 105-amino-acid chain: Met repressor (105 aa).

The protein belongs to the MetJ family. In terms of assembly, homodimer.

The protein localises to the cytoplasm. In terms of biological role, this regulatory protein, when combined with SAM (S-adenosylmethionine) represses the expression of the methionine regulon and of enzymes involved in SAM synthesis. This chain is Met repressor, found in Glaesserella parasuis serovar 5 (strain SH0165) (Haemophilus parasuis).